We begin with the raw amino-acid sequence, 204 residues long: Holliday junction branch migration complex subunit RuvA (204 aa).

The tract at residues 1 to 64 (MIGRLQGILL…EDAHLLFGFA (64 aa)) is domain I. The segment at 65-143 (QKTDRTLFRE…GVKQSDFFVE (79 aa)) is domain II. Residues 144 to 155 (STHIPLSPSIES) are flexible linker. The domain III stretch occupies residues 156 to 204 (HSESSSDEAISALIALGYKPAEAEKMVKRVAKPELTSEQVIREALKAAL).

The protein belongs to the RuvA family. Homotetramer. Forms an RuvA(8)-RuvB(12)-Holliday junction (HJ) complex. HJ DNA is sandwiched between 2 RuvA tetramers; dsDNA enters through RuvA and exits via RuvB. An RuvB hexamer assembles on each DNA strand where it exits the tetramer. Each RuvB hexamer is contacted by two RuvA subunits (via domain III) on 2 adjacent RuvB subunits; this complex drives branch migration. In the full resolvosome a probable DNA-RuvA(4)-RuvB(12)-RuvC(2) complex forms which resolves the HJ.

It is found in the cytoplasm. The RuvA-RuvB-RuvC complex processes Holliday junction (HJ) DNA during genetic recombination and DNA repair, while the RuvA-RuvB complex plays an important role in the rescue of blocked DNA replication forks via replication fork reversal (RFR). RuvA specifically binds to HJ cruciform DNA, conferring on it an open structure. The RuvB hexamer acts as an ATP-dependent pump, pulling dsDNA into and through the RuvAB complex. HJ branch migration allows RuvC to scan DNA until it finds its consensus sequence, where it cleaves and resolves the cruciform DNA. This is Holliday junction branch migration complex subunit RuvA from Haemophilus influenzae (strain PittGG).